Here is a 201-residue protein sequence, read N- to C-terminus: 3-isopropylmalate dehydratase small subunit (201 aa).

It belongs to the LeuD family. LeuD type 1 subfamily. In terms of assembly, heterodimer of LeuC and LeuD.

It carries out the reaction (2R,3S)-3-isopropylmalate = (2S)-2-isopropylmalate. Its pathway is amino-acid biosynthesis; L-leucine biosynthesis; L-leucine from 3-methyl-2-oxobutanoate: step 2/4. Its function is as follows. Catalyzes the isomerization between 2-isopropylmalate and 3-isopropylmalate, via the formation of 2-isopropylmaleate. This Xanthobacter autotrophicus (strain ATCC BAA-1158 / Py2) protein is 3-isopropylmalate dehydratase small subunit.